Reading from the N-terminus, the 368-residue chain is Peptide chain release factor 2 (368 aa).

Position 249 is an N5-methylglutamine (Q249).

This sequence belongs to the prokaryotic/mitochondrial release factor family. Methylated by PrmC. Methylation increases the termination efficiency of RF2.

The protein resides in the cytoplasm. Its function is as follows. Peptide chain release factor 2 directs the termination of translation in response to the peptide chain termination codons UGA and UAA. The chain is Peptide chain release factor 2 from Rhodococcus jostii (strain RHA1).